The primary structure comprises 428 residues: uncharacterized protein (428 aa).

Disordered stretches follow at residues 1–25, 157–219, and 247–271; these read MRDNSAKGITAGSESQQTTYDPTRT, DTAK…TEQV, and DFGTTPSSSGSGGNSNPGSPTPWRP. A compositionally biased stretch (polar residues) spans 12–22; the sequence is GSESQQTTYDP. Residues 157–171 show a composition bias toward basic and acidic residues; sequence DTAKSNEKLQGDESK. Over residues 172–186 the composition is skewed to low complexity; that stretch reads SSNGSSSTSTTTQRG. Residues 206–217 show a composition bias toward polar residues; it reads GSQGNSGEQGTE.

It belongs to the adhesin P1 family.

This is an uncharacterized protein from Mycoplasma pneumoniae (strain ATCC 29342 / M129 / Subtype 1) (Mycoplasmoides pneumoniae).